The following is a 225-amino-acid chain: MVLKRIRDMFVASVHEGLDKMENPKVMLNQYVRDMESDIAKAKQTIVKQHTIAYQFKKKYEEAAEVAGKRKNQAQLAFDAGEEELAKKALTEMKYLEGKAAEHKASYEQANSQLADLKEQLAALETKLQDVKDKKQALIARANAAKAKEHMNTTFDKIDSESAYREFLRIENRIEEMEIRANYSKSAEAGTELTRKEFADDVEAEIEKMRTLSLQKSDQTKAANE.

Coiled-coil stretches lie at residues 58–151 and 161–182; these read KKYE…KEHM and ESAYREFLRIENRIEEMEIRAN.

The protein belongs to the PspA/Vipp/IM30 family.

The protein is Protein LiaH (liaH) of Bacillus subtilis (strain 168).